A 182-amino-acid chain; its full sequence is Glutamyl-tRNA(Gln) amidotransferase subunit F, mitochondrial (182 aa).

Belongs to the GatF family. Subunit of the heterotrimeric GatFAB amidotransferase (AdT) complex, composed of A, B and F subunits.

It localises to the mitochondrion inner membrane. The enzyme catalyses L-glutamyl-tRNA(Gln) + L-glutamine + ATP + H2O = L-glutaminyl-tRNA(Gln) + L-glutamate + ADP + phosphate + H(+). Its function is as follows. Allows the formation of correctly charged Gln-tRNA(Gln) through the transamidation of misacylated Glu-tRNA(Gln) in the mitochondria. The reaction takes place in the presence of glutamine and ATP through an activated gamma-phospho-Glu-tRNA(Gln). Required for proper protein synthesis within the mitochondrion. This Candida tropicalis (strain ATCC MYA-3404 / T1) (Yeast) protein is Glutamyl-tRNA(Gln) amidotransferase subunit F, mitochondrial.